A 157-amino-acid chain; its full sequence is Ribonuclease H (157 aa).

One can recognise an RNase H type-1 domain in the interval 3–144; that stretch reads NSKTVHLYTD…CDELARDAAT (142 aa). Residues D12, E50, D72, and D136 each coordinate Mg(2+).

Belongs to the RNase H family. Monomer. Mg(2+) is required as a cofactor.

The protein resides in the cytoplasm. It catalyses the reaction Endonucleolytic cleavage to 5'-phosphomonoester.. Functionally, endonuclease that specifically degrades the RNA of RNA-DNA hybrids. This chain is Ribonuclease H, found in Idiomarina loihiensis (strain ATCC BAA-735 / DSM 15497 / L2-TR).